Consider the following 274-residue polypeptide: Speedy protein C (274 aa).

A speedy/Ringo box; Required for CDK-binding region spans residues 37–169 (HQEVQAFLSL…FHWAWTRDRR (133 aa)).

The protein belongs to the Speedy/Ringo family. As to quaternary structure, interacts with CDK1 and CDK2. Interacts with AURKB. As to expression, expressed in a variety of tissues including bone marrow, kidney, small intestine, liver, placenta and testis.

Its subcellular location is the cytoplasm. Its function is as follows. Promotes progression through the cell cycle via binding and activation of CDK1 and CDK2. Involved in the spindle-assembly checkpoint. Required for recruitment of MAD2L1, BUBR1 and BUB1 to kinetochores. Required for the correct localization of the active form of Aurora B in prometaphase. The sequence is that of Speedy protein C from Homo sapiens (Human).